A 390-amino-acid polypeptide reads, in one-letter code: Flagellar P-ring protein (390 aa).

Positions M1–S36 are cleaved as a signal peptide.

Belongs to the FlgI family. In terms of assembly, the basal body constitutes a major portion of the flagellar organelle and consists of four rings (L,P,S, and M) mounted on a central rod.

It is found in the periplasm. The protein localises to the bacterial flagellum basal body. Its function is as follows. Assembles around the rod to form the L-ring and probably protects the motor/basal body from shearing forces during rotation. This chain is Flagellar P-ring protein, found in Desulfotalea psychrophila (strain LSv54 / DSM 12343).